The following is a 907-amino-acid chain: Protein translocase subunit SecA (907 aa).

ATP contacts are provided by residues Q87, 105–109, and D513; that span reads GEGKT. The span at 841 to 853 shows a compositional bias: basic and acidic residues; that stretch reads EAQRRAQAEEAAR. The disordered stretch occupies residues 841–907; that stretch reads EAQRRAQAEE…KYKQCHGQIN (67 aa). The segment covering 854–865 has biased composition (low complexity); that stretch reads RAQAQHASAQSQ. The segment covering 872-887 has biased composition (basic and acidic residues); the sequence is EGHHQPVVRDERKVGR. The Zn(2+) site is built by C891, C893, C902, and H903.

Belongs to the SecA family. Monomer and homodimer. Part of the essential Sec protein translocation apparatus which comprises SecA, SecYEG and auxiliary proteins SecDF-YajC and YidC. Zn(2+) serves as cofactor.

It localises to the cell inner membrane. It is found in the cytoplasm. The catalysed reaction is ATP + H2O + cellular proteinSide 1 = ADP + phosphate + cellular proteinSide 2.. In terms of biological role, part of the Sec protein translocase complex. Interacts with the SecYEG preprotein conducting channel. Has a central role in coupling the hydrolysis of ATP to the transfer of proteins into and across the cell membrane, serving both as a receptor for the preprotein-SecB complex and as an ATP-driven molecular motor driving the stepwise translocation of polypeptide chains across the membrane. This Vibrio vulnificus (strain YJ016) protein is Protein translocase subunit SecA.